We begin with the raw amino-acid sequence, 348 residues long: Succinylglutamate desuccinylase (348 aa).

Positions 64, 67, and 164 each coordinate Zn(2+). Glu228 is an active-site residue.

It belongs to the AspA/AstE family. Succinylglutamate desuccinylase subfamily. Zn(2+) serves as cofactor.

The enzyme catalyses N-succinyl-L-glutamate + H2O = L-glutamate + succinate. Its pathway is amino-acid degradation; L-arginine degradation via AST pathway; L-glutamate and succinate from L-arginine: step 5/5. Its function is as follows. Transforms N(2)-succinylglutamate into succinate and glutamate. The polypeptide is Succinylglutamate desuccinylase (Shewanella amazonensis (strain ATCC BAA-1098 / SB2B)).